We begin with the raw amino-acid sequence, 420 residues long: uncharacterized protein (420 aa).

It belongs to the mimivirus R160 family.

The protein localises to the virion. This is an uncharacterized protein from Acanthamoeba polyphaga mimivirus (APMV).